Reading from the N-terminus, the 481-residue chain is Aspartyl/glutamyl-tRNA(Asn/Gln) amidotransferase subunit B (481 aa).

The protein belongs to the GatB/GatE family. GatB subfamily. In terms of assembly, heterotrimer of A, B and C subunits.

It carries out the reaction L-glutamyl-tRNA(Gln) + L-glutamine + ATP + H2O = L-glutaminyl-tRNA(Gln) + L-glutamate + ADP + phosphate + H(+). The enzyme catalyses L-aspartyl-tRNA(Asn) + L-glutamine + ATP + H2O = L-asparaginyl-tRNA(Asn) + L-glutamate + ADP + phosphate + 2 H(+). In terms of biological role, allows the formation of correctly charged Asn-tRNA(Asn) or Gln-tRNA(Gln) through the transamidation of misacylated Asp-tRNA(Asn) or Glu-tRNA(Gln) in organisms which lack either or both of asparaginyl-tRNA or glutaminyl-tRNA synthetases. The reaction takes place in the presence of glutamine and ATP through an activated phospho-Asp-tRNA(Asn) or phospho-Glu-tRNA(Gln). The sequence is that of Aspartyl/glutamyl-tRNA(Asn/Gln) amidotransferase subunit B from Ectopseudomonas mendocina (strain ymp) (Pseudomonas mendocina).